The primary structure comprises 389 residues: UDP-N-acetylglucosamine--N-acetylmuramyl-(pentapeptide) pyrophosphoryl-undecaprenol N-acetylglucosamine transferase (389 aa).

Residues 17–19 (TAG), Asn-137, Arg-179, Ser-213, and Gln-308 contribute to the UDP-N-acetyl-alpha-D-glucosamine site.

It belongs to the glycosyltransferase 28 family. MurG subfamily.

The protein resides in the cell membrane. The enzyme catalyses di-trans,octa-cis-undecaprenyl diphospho-N-acetyl-alpha-D-muramoyl-L-alanyl-D-glutamyl-meso-2,6-diaminopimeloyl-D-alanyl-D-alanine + UDP-N-acetyl-alpha-D-glucosamine = di-trans,octa-cis-undecaprenyl diphospho-[N-acetyl-alpha-D-glucosaminyl-(1-&gt;4)]-N-acetyl-alpha-D-muramoyl-L-alanyl-D-glutamyl-meso-2,6-diaminopimeloyl-D-alanyl-D-alanine + UDP + H(+). The protein operates within cell wall biogenesis; peptidoglycan biosynthesis. Cell wall formation. Catalyzes the transfer of a GlcNAc subunit on undecaprenyl-pyrophosphoryl-MurNAc-pentapeptide (lipid intermediate I) to form undecaprenyl-pyrophosphoryl-MurNAc-(pentapeptide)GlcNAc (lipid intermediate II). This is UDP-N-acetylglucosamine--N-acetylmuramyl-(pentapeptide) pyrophosphoryl-undecaprenol N-acetylglucosamine transferase from Rhodococcus erythropolis (strain PR4 / NBRC 100887).